The chain runs to 248 residues: Probable transcriptional regulatory protein R02753 (248 aa).

The protein belongs to the TACO1 family.

The protein localises to the cytoplasm. This is Probable transcriptional regulatory protein R02753 from Rhizobium meliloti (strain 1021) (Ensifer meliloti).